Reading from the N-terminus, the 501-residue chain is Phenylalanine--tRNA ligase alpha subunit (501 aa).

Residues Thr340 and Phe423 each contribute to the L-phenylalanine site. Mg(2+) is bound at residue Glu425. Phe448 provides a ligand contact to L-phenylalanine.

Belongs to the class-II aminoacyl-tRNA synthetase family. Phe-tRNA synthetase alpha subunit type 2 subfamily. As to quaternary structure, tetramer of two alpha and two beta subunits. Mg(2+) serves as cofactor.

Its subcellular location is the cytoplasm. It carries out the reaction tRNA(Phe) + L-phenylalanine + ATP = L-phenylalanyl-tRNA(Phe) + AMP + diphosphate + H(+). This chain is Phenylalanine--tRNA ligase alpha subunit, found in Methanococcus vannielii (strain ATCC 35089 / DSM 1224 / JCM 13029 / OCM 148 / SB).